The primary structure comprises 455 residues: Ribulose bisphosphate carboxylase large chain (455 aa).

Position 5 is an N6,N6,N6-trimethyllysine (K5). Substrate-binding residues include N114 and T164. K166 serves as the catalytic Proton acceptor. K168 lines the substrate pocket. Residues K192, D194, and E195 each coordinate Mg(2+). Position 192 is an N6-carboxylysine (K192). H285 (proton acceptor) is an active-site residue. 3 residues coordinate substrate: R286, H318, and S370.

It belongs to the RuBisCO large chain family. Type I subfamily. Heterohexadecamer of 8 large chains and 8 small chains; disulfide-linked. The disulfide link is formed within the large subunit homodimers. Mg(2+) is required as a cofactor. In terms of processing, the disulfide bond which can form in the large chain dimeric partners within the hexadecamer appears to be associated with oxidative stress and protein turnover.

It localises to the plastid. The protein resides in the chloroplast. It catalyses the reaction 2 (2R)-3-phosphoglycerate + 2 H(+) = D-ribulose 1,5-bisphosphate + CO2 + H2O. The enzyme catalyses D-ribulose 1,5-bisphosphate + O2 = 2-phosphoglycolate + (2R)-3-phosphoglycerate + 2 H(+). In terms of biological role, ruBisCO catalyzes two reactions: the carboxylation of D-ribulose 1,5-bisphosphate, the primary event in carbon dioxide fixation, as well as the oxidative fragmentation of the pentose substrate in the photorespiration process. Both reactions occur simultaneously and in competition at the same active site. The polypeptide is Ribulose bisphosphate carboxylase large chain (Lupinus microcarpus (Chick lupine)).